The sequence spans 473 residues: Cysteine--tRNA ligase (473 aa).

Cysteine 27 contributes to the Zn(2+) binding site. Residues 29-39 carry the 'HIGH' region motif; the sequence is ITPYDHVHVGH. Zn(2+) is bound by residues cysteine 213, histidine 238, and glutamate 242. The short motif at 271–275 is the 'KMSKS' region element; that stretch reads KMSKS. Position 274 (lysine 274) interacts with ATP.

This sequence belongs to the class-I aminoacyl-tRNA synthetase family. Requires Zn(2+) as cofactor.

The protein localises to the cytoplasm. It catalyses the reaction tRNA(Cys) + L-cysteine + ATP = L-cysteinyl-tRNA(Cys) + AMP + diphosphate. This chain is Cysteine--tRNA ligase, found in Pyrobaculum calidifontis (strain DSM 21063 / JCM 11548 / VA1).